The chain runs to 953 residues: Isoleucine--tRNA ligase (953 aa).

The 'HIGH' region motif lies at 58 to 68; the sequence is PYANGSIHIGH. Residue Glu577 coordinates L-isoleucyl-5'-AMP. Positions 618 to 622 match the 'KMSKS' region motif; sequence KMSKS. An ATP-binding site is contributed by Lys621. Positions 916, 919, 936, and 939 each coordinate Zn(2+).

The protein belongs to the class-I aminoacyl-tRNA synthetase family. IleS type 1 subfamily. Monomer. Zn(2+) is required as a cofactor.

It localises to the cytoplasm. The enzyme catalyses tRNA(Ile) + L-isoleucine + ATP = L-isoleucyl-tRNA(Ile) + AMP + diphosphate. Catalyzes the attachment of isoleucine to tRNA(Ile). As IleRS can inadvertently accommodate and process structurally similar amino acids such as valine, to avoid such errors it has two additional distinct tRNA(Ile)-dependent editing activities. One activity is designated as 'pretransfer' editing and involves the hydrolysis of activated Val-AMP. The other activity is designated 'posttransfer' editing and involves deacylation of mischarged Val-tRNA(Ile). This Aeromonas hydrophila subsp. hydrophila (strain ATCC 7966 / DSM 30187 / BCRC 13018 / CCUG 14551 / JCM 1027 / KCTC 2358 / NCIMB 9240 / NCTC 8049) protein is Isoleucine--tRNA ligase.